Here is a 201-residue protein sequence, read N- to C-terminus: Orotate phosphoribosyltransferase (201 aa).

113–121 contributes to the 5-phospho-alpha-D-ribose 1-diphosphate binding site; the sequence is EDIITTGKS. Residues Thr117 and Arg145 each contribute to the orotate site.

It belongs to the purine/pyrimidine phosphoribosyltransferase family. PyrE subfamily. As to quaternary structure, homodimer. It depends on Mg(2+) as a cofactor.

The catalysed reaction is orotidine 5'-phosphate + diphosphate = orotate + 5-phospho-alpha-D-ribose 1-diphosphate. The protein operates within pyrimidine metabolism; UMP biosynthesis via de novo pathway; UMP from orotate: step 1/2. Functionally, catalyzes the transfer of a ribosyl phosphate group from 5-phosphoribose 1-diphosphate to orotate, leading to the formation of orotidine monophosphate (OMP). The sequence is that of Orotate phosphoribosyltransferase from Helicobacter pylori (strain Shi470).